The primary structure comprises 269 residues: Tetrahydromethanopterin S-methyltransferase subunit C (269 aa).

8 helical membrane passes run 18–38 (VLVIGAVLSLIGMYIAHFVPS), 39–59 (LAMLLGGLLAAGACVAGANTT), 62–82 (VAAYGLGTGVPSIGMVSLGMG), 84–104 (ISALAGVLIPSVLAGSVALPF), 106–126 (LVLATPIIAAVVAIIVGFIVG), 152–172 (ALAILGFCTAFAGGFSADLII), 180–200 (IIALAFIAAGMSILHPFNACI), and 222–242 (LVFSIAKLDIVSILVAAVFWI).

Belongs to the MtrC family. As to quaternary structure, the complex is composed of 8 subunits; MtrA, MtrB, MtrC, MtrD, MtrE, MtrF, MtrG and MtrH.

Its subcellular location is the cell membrane. It catalyses the reaction 5-methyl-5,6,7,8-tetrahydromethanopterin + coenzyme M + 2 Na(+)(in) = 5,6,7,8-tetrahydromethanopterin + methyl-coenzyme M + 2 Na(+)(out). It participates in one-carbon metabolism; methanogenesis from CO(2); methyl-coenzyme M from 5,10-methylene-5,6,7,8-tetrahydromethanopterin: step 2/2. In terms of biological role, part of a complex that catalyzes the formation of methyl-coenzyme M and tetrahydromethanopterin from coenzyme M and methyl-tetrahydromethanopterin. This is an energy-conserving, sodium-ion translocating step. The polypeptide is Tetrahydromethanopterin S-methyltransferase subunit C (Methanococcus vannielii (strain ATCC 35089 / DSM 1224 / JCM 13029 / OCM 148 / SB)).